A 451-amino-acid chain; its full sequence is uncharacterized protein (451 aa).

Residues 1 to 22 form the signal peptide; it reads MKLKLIFSLFLVLVFCSLFVFG. N-linked (GlcNAc...) asparagine glycans are attached at residues Asn25, Asn45, Asn209, Asn326, and Asn402.

Its subcellular location is the secreted. This is an uncharacterized protein from Dictyostelium discoideum (Social amoeba).